The sequence spans 487 residues: Glutamyl-tRNA(Gln) amidotransferase subunit A (487 aa).

Residues Lys74 and Ser149 each act as charge relay system in the active site. Ser173 serves as the catalytic Acyl-ester intermediate.

Belongs to the amidase family. GatA subfamily. Heterotrimer of A, B and C subunits.

It catalyses the reaction L-glutamyl-tRNA(Gln) + L-glutamine + ATP + H2O = L-glutaminyl-tRNA(Gln) + L-glutamate + ADP + phosphate + H(+). In terms of biological role, allows the formation of correctly charged Gln-tRNA(Gln) through the transamidation of misacylated Glu-tRNA(Gln) in organisms which lack glutaminyl-tRNA synthetase. The reaction takes place in the presence of glutamine and ATP through an activated gamma-phospho-Glu-tRNA(Gln). The sequence is that of Glutamyl-tRNA(Gln) amidotransferase subunit A from Prochlorococcus marinus (strain MIT 9211).